The primary structure comprises 953 residues: Zinc finger protein 618 (953 aa).

The residue at position 1 (Met1) is an N-acetylmethionine. Residues 1–56 are disordered; sequence MSQPDGAAAPQVDGASAPGRKSAVNRERLKRSQKSSKVEGPEPVPAEASLSAEQGT. Residues Lys63 and Lys81 each participate in a glycyl lysine isopeptide (Lys-Gly) (interchain with G-Cter in SUMO2) cross-link. 2 C2H2-type zinc fingers span residues 146–168 and 187–209; these read YECGICGKKYKYYNCFQTHVRAH and YTCDICGKKYKYYSCFQEHRDLH. A Glycyl lysine isopeptide (Lys-Gly) (interchain with G-Cter in SUMO2) cross-link involves residue Lys238. The C2H2-type 3 zinc-finger motif lies at 255–277; sequence YTCEFCGKQYKYYTPYQEHVALH. Disordered stretches follow at residues 283–305 and 337–390; these read APGWEPPEDPDTGSECSHPEVTP and TPPA…SSEP. Residues 339 to 354 show a composition bias toward polar residues; the sequence is PATQTQTFRAPNSGSP. The span at 365–379 shows a compositional bias: basic and acidic residues; the sequence is FSRRVESKAQNHFEE. The C2H2-type 4 zinc finger occupies 391 to 413; the sequence is YTCGACGIQFQFYSNLLEHMQSH. Over residues 419 to 428 the composition is skewed to polar residues; the sequence is NNITSNQSRS. The interval 419 to 461 is disordered; that stretch reads NNITSNQSRSPPAAVEEKWKPQAQRNSANNTTTSGLTPNSVIP. Lys436 participates in a covalent cross-link: Glycyl lysine isopeptide (Lys-Gly) (interchain with G-Cter in SUMO2). Residues 441–458 show a composition bias toward polar residues; sequence AQRNSANNTTTSGLTPNS.

It belongs to the krueppel C2H2-type zinc-finger protein family. In terms of assembly, interacts with UHRF2.

The protein resides in the nucleus. Its subcellular location is the chromosome. Regulates UHRF2 function as a specific 5-hydroxymethylcytosine (5hmC) reader by regulating its chromatin localization. The chain is Zinc finger protein 618 (Znf618) from Mus musculus (Mouse).